The primary structure comprises 435 residues: uncharacterized protein (435 aa).

The next 11 membrane-spanning stretches (helical) occupy residues 9-29 (IIVL…ITFA), 57-77 (VGLD…GNIM), 110-130 (TLFG…GGIM), 146-166 (AINV…VLIV), 176-196 (VAAL…ALMT), 226-246 (LPSL…VFTP), 280-300 (VVTS…SWAM), 321-341 (WVIL…MDIT), 343-363 (AILI…IDPV), 367-387 (IIMV…TILF), and 408-428 (FLAL…SLLL).

Belongs to the YiaN/YgiK family.

The protein localises to the cell inner membrane. This is an uncharacterized protein from Salmonella typhimurium (strain LT2 / SGSC1412 / ATCC 700720).